A 124-amino-acid chain; its full sequence is Small ribosomal subunit protein uS12 (124 aa).

3-methylthioaspartic acid is present on aspartate 89.

The protein belongs to the universal ribosomal protein uS12 family. As to quaternary structure, part of the 30S ribosomal subunit. Contacts proteins S8 and S17. May interact with IF1 in the 30S initiation complex.

Its function is as follows. With S4 and S5 plays an important role in translational accuracy. Functionally, interacts with and stabilizes bases of the 16S rRNA that are involved in tRNA selection in the A site and with the mRNA backbone. Located at the interface of the 30S and 50S subunits, it traverses the body of the 30S subunit contacting proteins on the other side and probably holding the rRNA structure together. The combined cluster of proteins S8, S12 and S17 appears to hold together the shoulder and platform of the 30S subunit. The protein is Small ribosomal subunit protein uS12 of Shewanella loihica (strain ATCC BAA-1088 / PV-4).